A 257-amino-acid chain; its full sequence is Type I iodothyronine deiodinase (257 aa).

Over 1-12 the chain is Extracellular; that stretch reads MGLPGLGLLLKR. Residues 13 to 33 traverse the membrane as a helical; Signal-anchor for type III membrane protein segment; that stretch reads FGVLVRVALKVAVGKVLLTLW. The Cytoplasmic portion of the chain corresponds to 34–257; that stretch reads PSAIRPHLLA…CRSSAQSPRL (224 aa). Residue Sec126 is part of the active site. Sec126 is a non-standard amino acid (selenocysteine).

The protein belongs to the iodothyronine deiodinase family. In terms of assembly, predominantly monomer. Can form homodimers but homodimerization is not essential for enzyme activity. In terms of tissue distribution, liver specific.

Its subcellular location is the cell membrane. The protein localises to the endoplasmic reticulum membrane. It localises to the basolateral cell membrane. It catalyses the reaction 3,3',5-triiodo-L-thyronine + iodide + A + H(+) = L-thyroxine + AH2. It carries out the reaction 3,3',5'-triiodo-L-thyronine + iodide + A + H(+) = L-thyroxine + AH2. The catalysed reaction is 3,3'-diiodo-L-thyronine + iodide + A + H(+) = 3,3',5'-triiodo-L-thyronine + AH2. The enzyme catalyses 3,3'-diiodo-L-thyronine + iodide + A + H(+) = 3,3',5-triiodo-L-thyronine + AH2. It catalyses the reaction 3'-iodo-L-thyronine + iodide + A + H(+) = 3',5'-diiodo-L-thyronine + AH2. It carries out the reaction 3-iodo-L-thyronine + iodide + A + H(+) = 3,5-diiodo-L-thyronine + AH2. The catalysed reaction is 3-iodo-L-thyronine + iodide + A + H(+) = 3,3'-diiodo-L-thyronine + AH2. The enzyme catalyses 3,3'-diiodothyronamine + iodide + A + H(+) = 3,3',5'-triiodothyronamine + AH2. It catalyses the reaction 3'-iodothyronamine + iodide + A + H(+) = 3',5'-diiodothyronamine + AH2. It carries out the reaction 3-iodothyronamine + iodide + A + H(+) = 3,3'-diiodothyronamine + AH2. The catalysed reaction is 3,3'-diiodothyronamine + iodide + A + H(+) = 3,3',5-triiodothyronamine + AH2. The enzyme catalyses 3-iodothyronamine + iodide + A + H(+) = 3,5-diiodothyronamine + AH2. It catalyses the reaction 3,3'-diiodo-L-thyronine sulfate + iodide + A + H(+) = 3,3',5'-triiodo-L-thyronine sulfate + AH2. It carries out the reaction 3,3',5'-triiodo-L-thyronine sulfate + iodide + A + H(+) = L-thyroxine sulfate + AH2. The catalysed reaction is 3,3'-diiodo-L-thyronine sulfate + iodide + A + H(+) = 3,3',5-triiodo-L-thyronine sulfate + AH2. In terms of biological role, plays a crucial role in the metabolism of thyroid hormones (TH) and has specific roles in TH activation and inactivation by deiodination. Catalyzes the deiodination of L-thyroxine (T4) to 3,5,3'-triiodothyronine (T3) and 3',5'-diiodothyronine (3',5'-T2) to 3'-monoiodothyronine (3'-T1) via outer-ring deiodination (ORD). Catalyzes the deiodination of T4 to 3,3',5'-triiodothyronine (rT3), T3 to 3,3'-diiodothyronine (3,3'-T2), 3,5-diiodothyronine (3,5-T2) to 3-monoiodothyronine (3-T1) and 3,3'-T2 to 3-T1 via inner-ring deiodination (IRD). Catalyzes the deiodination of rT3 to 3,3'-T2 via ORD. Catalyzes the phenolic ring deiodinations of 3,3',5'-triiodothyronamine, 3',5'-diiodothyronamine and 3,3'-diiodothyronamine as well as tyrosyl ring deiodinations of 3,5,3'-triiodothyronamine and 3,5-diiodothyronamine. Catalyzes the deiodination of L-thyroxine sulfate and 3,3',5-triiodo-L-thyronine sulfate via IRD and of 3,3',5'-triiodo-L-thyronine sulfate via ORD. The protein is Type I iodothyronine deiodinase (DIO1) of Suncus murinus (Asian house shrew).